A 368-amino-acid polypeptide reads, in one-letter code: CCA-adding enzyme (368 aa).

Residues Gly-8 and Arg-11 each coordinate ATP. The CTP site is built by Gly-8 and Arg-11. Residues Asp-21 and Asp-23 each coordinate Mg(2+). ATP contacts are provided by Arg-91, Arg-137, and Arg-140. CTP contacts are provided by Arg-91, Arg-137, and Arg-140.

Belongs to the tRNA nucleotidyltransferase/poly(A) polymerase family. Bacterial CCA-adding enzyme type 2 subfamily. Mg(2+) serves as cofactor.

The catalysed reaction is a tRNA precursor + 2 CTP + ATP = a tRNA with a 3' CCA end + 3 diphosphate. The enzyme catalyses a tRNA with a 3' CCA end + 2 CTP + ATP = a tRNA with a 3' CCACCA end + 3 diphosphate. Catalyzes the addition and repair of the essential 3'-terminal CCA sequence in tRNAs without using a nucleic acid template. Adds these three nucleotides in the order of C, C, and A to the tRNA nucleotide-73, using CTP and ATP as substrates and producing inorganic pyrophosphate. tRNA 3'-terminal CCA addition is required both for tRNA processing and repair. Also involved in tRNA surveillance by mediating tandem CCA addition to generate a CCACCA at the 3' terminus of unstable tRNAs. While stable tRNAs receive only 3'-terminal CCA, unstable tRNAs are marked with CCACCA and rapidly degraded. The sequence is that of CCA-adding enzyme from Pseudomonas putida (strain ATCC 700007 / DSM 6899 / JCM 31910 / BCRC 17059 / LMG 24140 / F1).